Consider the following 704-residue polypeptide: Protein NBR1 homolog (704 aa).

Position 1 is an N-acetylmethionine (Met-1). The region spanning Ala-7–Gly-92 is the PB1 domain. 3 stretches are compositionally biased toward polar residues: residues Thr-95–Pro-108, Pro-171–Ser-189, and His-223–Ser-233. 2 disordered regions span residues Thr-95–Pro-114 and Pro-171–Ser-233. A ZZ-type; degenerate zinc finger spans residues His-286–Ser-336. Zn(2+) is bound by residues Cys-291, Cys-294, Cys-315, and Cys-318. The UBA domain occupies Gly-657–Glu-701. The LIR motif lies at Trp-661–Ile-664.

In terms of assembly, homodimer. Interacts with ATG8A, ATG8B, ATG8C, ATG8D, ATG8F and ATG8I. Binds to ubiquitin.

The protein resides in the cytoplasm. It localises to the vacuole. Its function is as follows. Autophagic substrate degraded in the vacuole by non-selective autophagy. Requires ATG8 protein expression to be recognized as an autophagic substrate. Acts probably as a receptor for autophagosomal degradation of ubiquitinated proteins. Targets ubiquitinated protein aggregates derived from denatured or damaged non-native proteins generated under stress conditions. Functions additively with the E3 ubiquitin-protein ligase CHIP for autophagosomal degradation of proteotoxic aggregates formed under stress conditions. This chain is Protein NBR1 homolog, found in Arabidopsis thaliana (Mouse-ear cress).